The following is a 1007-amino-acid chain: Glutamate receptor ionotropic, delta-2 (1007 aa).

A signal peptide spans 1-23 (MEVFPFLLVLSVWWSRTWDSANA). Residues 24–345 (DSIIHIGAIF…NAFHKKLEDR (322 aa)) are interaction with CBLN1 homotrimer. At 24–566 (DSIIHIGAIF…DMFACLAPFD (543 aa)) the chain is on the extracellular side. 3 cysteine pairs are disulfide-bonded: Cys83–Cys355, Cys99–Cys131, and Cys298–Cys310. Asn293 carries an N-linked (GlcNAc...) asparagine glycan. Residue Asn426 is glycosylated (N-linked (GlcNAc...) asparagine). Residues Glu531, Val534, and Asp535 each coordinate Ca(2+). Residues 567–587 (LSLWACIAGTVLLVGLLVYLL) form a helical membrane-spanning segment. The Cytoplasmic portion of the chain corresponds to 588-635 (NWLNPPRLQMGSMTSTTLYNSMWFVYGSFVQQGGEVPYTTLATRMMMG). The helical transmembrane segment at 636–656 (AWWLFALIVISSYTANLAAFL) threads the bilayer. The Extracellular segment spans residues 657–830 (TITRIESSIQ…QKGGALDIKS (174 aa)). Residues Asn713 and Asn716 are each glycosylated (N-linked (GlcNAc...) asparagine). Ca(2+) contacts are provided by Asp753, Asp755, and Ser757. Residues 831–851 (FAGVFCILAAGIVLSCFIAML) form a helical membrane-spanning segment. Topologically, residues 852–1007 (ETWWNKRKGS…GNDPDRGTSI (156 aa)) are cytoplasmic. Position 883 is a phosphoserine (Ser883). The residue at position 886 (Thr886) is a Phosphothreonine. Ser890 carries the phosphoserine modification. The segment at 921–991 (DFRNTHITTT…MSSIPYQPTP (71 aa)) is interaction with AP4M1. Residues 1005–1007 (TSI) carry the PDZ-binding motif. Ser1006 is subject to Phosphoserine.

It belongs to the glutamate-gated ion channel (TC 1.A.10.1) family. GRID2 subfamily. As to quaternary structure, tetramer; dimer of dimers. Interacts with EML2, MAGI2 (via PDZ domains) and AP4M1. Interacts with BECN1, GOPC, GRID2IP, SHANK1 and SHANK2. Interacts with CBLN2, but not with CBLN4. Interacts with CBLN1 (via C1q domain); the interaction is CBLN1-NRX1 complex formation-dependent; CBLN1-binding is calcium-independent; CBLN1 hexamers anchor GRID2 N-terminal domain dimers to monomeric NRXN1 isoform beta; promotes synaptogenesis and mediates the D-Serine-dependent long term depression signals and AMPA receptor endocytosis.

It localises to the postsynaptic cell membrane. The enzyme catalyses Ca(2+)(in) = Ca(2+)(out). It catalyses the reaction Na(+)(in) = Na(+)(out). Member of the ionotropic glutamate receptor family, which plays a crucial role in synaptic organization and signal transduction in the central nervous system. Although it shares structural features with ionotropic glutamate receptors, does not bind glutamate as a primary ligand. Promotes synaptogenesis and mediates the D-Serine-dependent long term depression signals and AMPA receptor endocytosis of cerebellar parallel fiber-Purkinje cell (PF-PC) synapses through the NRX1B-CBLN1-GRID2 triad complex. In the presence of neurexins and cerebellins, forms cation-selective channels that are proposed to be gated by glycine and D-serine. However, recent research disputes this ligand-gated cation channel activity. Cation-selective ion channel activity can be triggered by GRM1 in Purkinje cells. The sequence is that of Glutamate receptor ionotropic, delta-2 (GRID2) from Homo sapiens (Human).